A 545-amino-acid chain; its full sequence is Cryptochrome-1 (545 aa).

Positions 3–140 (INNILWFRHG…RCVENVSHTL (138 aa)) constitute a Photolyase/cryptochrome alpha/beta domain. FAD-binding positions include Arg-237, Ser-265, Ser-267, Gln-308, His-375, 407–409 (DAD), Cys-413, and Asn-416.

It belongs to the DNA photolyase class-1 family. Interacts with tim and per; promoted by light conditions. FAD serves as cofactor.

Its subcellular location is the cytoplasm. The protein localises to the perinuclear region. It localises to the nucleus. Blue light-dependent regulator that is the input of the circadian feedback loop. Has no photolyase activity for cyclobutane pyrimidine dimers or 6-4 photoproducts. Regulation of expression by light suggests a role in photoreception for locomotor activity rhythms. Functions, together with per, as a transcriptional repressor required for the oscillation of peripheral circadian clocks and for the correct specification of clock cells. Genes directly activated by the transcription factors Clock (Clk) and cycle (cyc) are repressed by cry. The sequence is that of Cryptochrome-1 from Anopheles gambiae (African malaria mosquito).